Consider the following 144-residue polypeptide: DNA-directed RNA polymerases II and V subunit 6B (144 aa).

Over residues 1-32 the composition is skewed to acidic residues; it reads MADDDYNEVDDLGYEDEPAEPEIEEGVEEDAD. Positions 1–62 are disordered; it reads MADDDYNEVD…EPVQRPRKTS (62 aa). Positions 46 to 56 are enriched in basic and acidic residues; it reads TEDKVETEPVQ.

Belongs to the archaeal Rpo6/eukaryotic RPB6 RNA polymerase subunit family. In terms of assembly, component of the RNA polymerase II and V complexes.

Its subcellular location is the nucleus. Its function is as follows. DNA-dependent RNA polymerase catalyzes the transcription of DNA into RNA using the four ribonucleoside triphosphates as substrates. Component of RNA polymerase II which synthesizes mRNA precursors and many functional non-coding RNAs. Pol II is the central component of the basal RNA polymerase II transcription machinery. It is composed of mobile elements that move relative to each other. Component of RNA polymerase V which mediates RNA-directed DNA methylation-dependent (RdDM) transcriptional gene silencing (TGS) of endogenous repeated sequences, including transposable elements. This is DNA-directed RNA polymerases II and V subunit 6B (NRPB6B) from Arabidopsis thaliana (Mouse-ear cress).